The sequence spans 838 residues: Protein translocase subunit SecA (838 aa).

ATP contacts are provided by residues Q86, 104 to 108 (GEGKT), and D493. Residues 793–838 (NTQAVSGGEDSGKKKTKKPVVKSNTVKRNDPCPCGSGKKYKNCHGQ) form a disordered region. Residues C824, C826, C835, and H836 each contribute to the Zn(2+) site.

The protein belongs to the SecA family. Monomer and homodimer. Part of the essential Sec protein translocation apparatus which comprises SecA, SecYEG and auxiliary proteins SecDF. Other proteins may also be involved. Zn(2+) is required as a cofactor.

It is found in the cell membrane. It localises to the cytoplasm. It catalyses the reaction ATP + H2O + cellular proteinSide 1 = ADP + phosphate + cellular proteinSide 2.. Its function is as follows. Part of the Sec protein translocase complex. Interacts with the SecYEG preprotein conducting channel. Has a central role in coupling the hydrolysis of ATP to the transfer of proteins into and across the cell membrane, serving as an ATP-driven molecular motor driving the stepwise translocation of polypeptide chains across the membrane. The protein is Protein translocase subunit SecA of Oceanobacillus iheyensis (strain DSM 14371 / CIP 107618 / JCM 11309 / KCTC 3954 / HTE831).